The sequence spans 495 residues: Probable cytochrome P450 4s3 (495 aa).

Heme contacts are provided by E307 and C436.

Belongs to the cytochrome P450 family. Requires heme as cofactor.

Its subcellular location is the endoplasmic reticulum membrane. It is found in the microsome membrane. In terms of biological role, may be involved in the metabolism of insect hormones and in the breakdown of synthetic insecticides. The sequence is that of Probable cytochrome P450 4s3 (Cyp4s3) from Drosophila melanogaster (Fruit fly).